The sequence spans 357 residues: Olfactory receptor 2B2 (357 aa).

Residues M1 to I25 lie on the Extracellular side of the membrane. The N-linked (GlcNAc...) asparagine glycan is linked to N5. A helical transmembrane segment spans residues P26–S49. The Cytoplasmic segment spans residues H50–T57. The chain crosses the membrane as a helical span at residues P58–P79. Over Q80 to Q100 the chain is Extracellular. C97 and C189 are oxidised to a cystine. Residues L101–F120 form a helical membrane-spanning segment. Residues D121–R139 lie on the Cytoplasmic side of the membrane. The chain crosses the membrane as a helical span at residues L140–L158. The Extracellular portion of the chain corresponds to Q159–N195. A helical transmembrane segment spans residues E196–A219. The Cytoplasmic segment spans residues F220–K236. The chain crosses the membrane as a helical span at residues A237 to Y259. The Extracellular portion of the chain corresponds to L260–K272. The chain crosses the membrane as a helical span at residues M273–L292. The Cytoplasmic segment spans residues R293–P357.

It belongs to the G-protein coupled receptor 1 family.

The protein resides in the cell membrane. Odorant receptor. This chain is Olfactory receptor 2B2 (OR2B2), found in Homo sapiens (Human).